The primary structure comprises 560 residues: Membrane protein insertase YidC (560 aa).

Helical transmembrane passes span 5 to 25, 334 to 354, 357 to 377, 431 to 451, 476 to 496, and 522 to 542; these read IINL…WQYF, AIDF…MNFF, YVGN…LLMF, LPIL…YVTI, LFGL…WPIL, and FMPL…LIYW.

This sequence belongs to the OXA1/ALB3/YidC family. Type 1 subfamily. Interacts with the Sec translocase complex via SecD. Specifically interacts with transmembrane segments of nascent integral membrane proteins during membrane integration.

It is found in the cell inner membrane. Its function is as follows. Required for the insertion and/or proper folding and/or complex formation of integral membrane proteins into the membrane. Involved in integration of membrane proteins that insert both dependently and independently of the Sec translocase complex, as well as at least some lipoproteins. Aids folding of multispanning membrane proteins. This is Membrane protein insertase YidC from Rickettsia felis (strain ATCC VR-1525 / URRWXCal2) (Rickettsia azadi).